Here is a 53-residue protein sequence, read N- to C-terminus: Cytochrome c-552 (53 aa).

Heme c-binding residues include Cys19, Cys22, His23, and Met44.

Post-translationally, binds 1 heme c group covalently per subunit.

The protein resides in the cell membrane. This Schinkia azotoformans (Bacillus azotoformans) protein is Cytochrome c-552.